A 180-amino-acid polypeptide reads, in one-letter code: UPF0743 protein C215.06c (180 aa).

C2HC LYAR-type zinc fingers lie at residues 1-26 (MVSF…SRCH) and 27-51 (GAYF…TSCM). Residues cysteine 6, cysteine 9, histidine 21, cysteine 25, cysteine 32, cysteine 35, histidine 47, and cysteine 50 each contribute to the Zn(2+) site. The disordered stretch occupies residues 61–125 (LYRPTKKELK…KETVSSPAEQ (65 aa)). Residues 77–95 (NAVNSKELSPNTDNQNTPA) show a composition bias toward polar residues. The residue at position 85 (serine 85) is a Phosphoserine. Residues 100–111 (HSLDENEKDKEN) show a composition bias toward basic and acidic residues.

This sequence belongs to the UPF0743 family.

The protein resides in the nucleus. The chain is UPF0743 protein C215.06c from Schizosaccharomyces pombe (strain 972 / ATCC 24843) (Fission yeast).